The following is a 468-amino-acid chain: Probable citrate synthase, mitochondrial (468 aa).

Active-site residues include His303, His349, and Asp404.

The protein belongs to the citrate synthase family. In terms of assembly, homodimer.

It is found in the mitochondrion matrix. It carries out the reaction oxaloacetate + acetyl-CoA + H2O = citrate + CoA + H(+). Its pathway is carbohydrate metabolism; tricarboxylic acid cycle; isocitrate from oxaloacetate: step 1/2. In Caenorhabditis elegans, this protein is Probable citrate synthase, mitochondrial (cts-1).